The following is a 414-amino-acid chain: Phosphopentomutase (414 aa).

Positions 10, 309, 314, 350, 351, and 362 each coordinate Mn(2+).

This sequence belongs to the phosphopentomutase family. The cofactor is Mn(2+).

The protein resides in the cytoplasm. The enzyme catalyses 2-deoxy-alpha-D-ribose 1-phosphate = 2-deoxy-D-ribose 5-phosphate. It carries out the reaction alpha-D-ribose 1-phosphate = D-ribose 5-phosphate. Its pathway is carbohydrate degradation; 2-deoxy-D-ribose 1-phosphate degradation; D-glyceraldehyde 3-phosphate and acetaldehyde from 2-deoxy-alpha-D-ribose 1-phosphate: step 1/2. In terms of biological role, isomerase that catalyzes the conversion of deoxy-ribose 1-phosphate (dRib-1-P) and ribose 1-phosphate (Rib-1-P) to deoxy-ribose 5-phosphate (dRib-5-P) and ribose 5-phosphate (Rib-5-P), respectively. The protein is Phosphopentomutase of Hahella chejuensis (strain KCTC 2396).